The primary structure comprises 316 residues: Glutathione synthetase (316 aa).

The region spanning 125-311 is the ATP-grasp domain; it reads KLFTAWFPEL…ITGMLMNAIE (187 aa). 151–207 is a binding site for ATP; that stretch reads HQKHGDVIFKPLDGMGGASIFRLKKDDPNVGVIIETLTEHGNRFCMAQNFLPAIKEG. Glu281 and Asn283 together coordinate Mg(2+).

Belongs to the prokaryotic GSH synthase family. It depends on Mg(2+) as a cofactor. Mn(2+) is required as a cofactor.

It carries out the reaction gamma-L-glutamyl-L-cysteine + glycine + ATP = glutathione + ADP + phosphate + H(+). Its pathway is sulfur metabolism; glutathione biosynthesis; glutathione from L-cysteine and L-glutamate: step 2/2. The chain is Glutathione synthetase from Photorhabdus laumondii subsp. laumondii (strain DSM 15139 / CIP 105565 / TT01) (Photorhabdus luminescens subsp. laumondii).